Reading from the N-terminus, the 153-residue chain is RNA-binding protein 3 (153 aa).

Residues Gly6 to Lys84 form the RRM domain. An Omega-N-methylarginine modification is found at Arg47. The segment at His81–Asn153 is disordered. Residues Ser89–Ser112 show a composition bias toward gly residues. Residue Arg103 is modified to Asymmetric dimethylarginine; alternate. The residue at position 103 (Arg103) is a Dimethylated arginine; alternate. An Omega-N-methylarginine; alternate modification is found at Arg103. Omega-N-methylarginine is present on residues Arg118 and Arg128. Phosphoserine occurs at positions 133 and 143. Tyr151 bears the Phosphotyrosine mark.

In terms of assembly, interacts with RPL4. Associates with the 60S ribosomal subunits in an RNA-independent manner. Post-translationally, arg-103 is dimethylated, probably to asymmetric dimethylarginine. Phosphorylated.

It is found in the nucleus. The protein localises to the cytoplasm. It localises to the cell projection. The protein resides in the dendrite. In terms of biological role, cold-inducible mRNA binding protein that enhances global protein synthesis at both physiological and mild hypothermic temperatures. Reduces the relative abundance of microRNAs, when overexpressed. Enhances phosphorylation of translation initiation factors and active polysome formation. This chain is RNA-binding protein 3 (Rbm3), found in Mus musculus (Mouse).